We begin with the raw amino-acid sequence, 257 residues long: 3-deoxy-manno-octulosonate cytidylyltransferase (257 aa).

Belongs to the KdsB family.

The protein localises to the cytoplasm. It carries out the reaction 3-deoxy-alpha-D-manno-oct-2-ulosonate + CTP = CMP-3-deoxy-beta-D-manno-octulosonate + diphosphate. It participates in nucleotide-sugar biosynthesis; CMP-3-deoxy-D-manno-octulosonate biosynthesis; CMP-3-deoxy-D-manno-octulosonate from 3-deoxy-D-manno-octulosonate and CTP: step 1/1. The protein operates within bacterial outer membrane biogenesis; lipopolysaccharide biosynthesis. Activates KDO (a required 8-carbon sugar) for incorporation into bacterial lipopolysaccharide in Gram-negative bacteria. This is 3-deoxy-manno-octulosonate cytidylyltransferase from Stenotrophomonas maltophilia (strain R551-3).